Consider the following 253-residue polypeptide: Tryptophan synthase alpha chain (253 aa).

Active-site proton acceptor residues include E48 and D59.

The protein belongs to the TrpA family. In terms of assembly, tetramer of two alpha and two beta chains.

The enzyme catalyses (1S,2R)-1-C-(indol-3-yl)glycerol 3-phosphate + L-serine = D-glyceraldehyde 3-phosphate + L-tryptophan + H2O. Its pathway is amino-acid biosynthesis; L-tryptophan biosynthesis; L-tryptophan from chorismate: step 5/5. In terms of biological role, the alpha subunit is responsible for the aldol cleavage of indoleglycerol phosphate to indole and glyceraldehyde 3-phosphate. The polypeptide is Tryptophan synthase alpha chain (Caldicellulosiruptor saccharolyticus (strain ATCC 43494 / DSM 8903 / Tp8T 6331)).